The primary structure comprises 654 residues: Fatty acid photodecarboxylase, chloroplastic (654 aa).

A chloroplast-targeting transit peptide spans 1–62; sequence MASITSRASA…RRGGALSARA (62 aa). FAD contacts are provided by residues 93-94, Glu-114, Leu-162, Ser-166, 170-173, and Val-298; these read TA and NATL. Hexadecanoate contacts are provided by Cys-432, Arg-451, Tyr-466, and Gln-486. Residue Gly-622 participates in FAD binding.

Belongs to the GMC oxidoreductase family. FAD serves as cofactor.

The protein localises to the plastid. Its subcellular location is the chloroplast. The enzyme catalyses a long-chain fatty acid + hnu + H(+) = a long-chain alkane + CO2. The catalysed reaction is hnu + hexadecanoate + H(+) = pentadecane + CO2. It catalyses the reaction hnu + octadecanoate + H(+) = heptadecane + CO2. It carries out the reaction heptadecanoate + hnu + H(+) = hexadecane + CO2. The enzyme catalyses hnu + tetradecanoate + H(+) = tridecane + CO2. The catalysed reaction is octanoate + hnu + H(+) = heptane + CO2. With respect to regulation, activated by blue light and repressed by red light. Its function is as follows. Catalyzes the decarboxylation of free fatty acids to n-alkanes or n-alkenes in response to blue light. Substrate preference is toward fatty acids with C16 or C17 chains. Converts n-octanoic acid (C8 chain) more efficiently than palmitate (n-hexadecanoic acid, C16 chain) into n-heptane (C7 chain) and n-pentadecane (C15 chain), respectively, partly due to an autocatalytic effect of its n-heptane product. Saturated fatty acids are converted to alkanes, not alkenes. The decarboxylation is initiated through electron abstraction from the fatty acid by the photo-excited FAD. This chain is Fatty acid photodecarboxylase, chloroplastic, found in Chlorella variabilis (Green alga).